The following is a 113-amino-acid chain: Large ribosomal subunit protein eL31 (113 aa).

The protein belongs to the eukaryotic ribosomal protein eL31 family.

This Candida glabrata (strain ATCC 2001 / BCRC 20586 / JCM 3761 / NBRC 0622 / NRRL Y-65 / CBS 138) (Yeast) protein is Large ribosomal subunit protein eL31 (RPL31).